Reading from the N-terminus, the 329-residue chain is MEPRVITYTKNVFLPLTSVCRNRCGYCSFRTPVQEGCVMLPEEVEAVLAQGQAAGCTEALFTFGEHPEEEEGFRAYLEKTGYDTILDYCEAMCRLALRYGILPHTNAGILTYDEMKRLRPTNASMGLMLETTARIPAHQGSKGKEPEVRLAMMEDAGRLKIPFTTGLLLGIGETAAGREDSLIAIRDIHKKYGHIQEIILQNFCPKNNTPMAAFRVPDTQEICNTILMARRILPEEISIQVAPNLIDASRLIGCGVSDLGGISPVTIDYVNPEHPWPAFNDLKKIVGDATLQERLCIYPRFIRPGWYDPGLQPLINRLNQRISRGSSQP.

Residues 6 to 244 form the Radical SAM core domain; sequence ITYTKNVFLP…EEISIQVAPN (239 aa). The [4Fe-4S] cluster site is built by Cys20, Cys24, and Cys27.

It belongs to the radical SAM superfamily. CofG family. As to quaternary structure, consists of two subunits, CofG and CofH. It depends on [4Fe-4S] cluster as a cofactor.

The catalysed reaction is 5-amino-5-(4-hydroxybenzyl)-6-(D-ribitylimino)-5,6-dihydrouracil + S-adenosyl-L-methionine = 7,8-didemethyl-8-hydroxy-5-deazariboflavin + 5'-deoxyadenosine + L-methionine + NH4(+) + H(+). It participates in cofactor biosynthesis; coenzyme F0 biosynthesis. Its function is as follows. Catalyzes the radical-mediated synthesis of 7,8-didemethyl-8-hydroxy-5-deazariboflavin from 5-amino-5-(4-hydroxybenzyl)-6-(D-ribitylimino)-5,6-dihydrouracil. This chain is 7,8-didemethyl-8-hydroxy-5-deazariboflavin synthase, found in Methanoregula boonei (strain DSM 21154 / JCM 14090 / 6A8).